A 399-amino-acid polypeptide reads, in one-letter code: [Pyruvate dehydrogenase (acetyl-transferring)] kinase, mitochondrial (399 aa).

The N-terminal 18 residues, 1 to 18 (MFLTRRLLGPFTSAIARK), are a transit peptide targeting the mitochondrion. Positions 123–360 (VVETMAEGLI…DAMIFLKAIP (238 aa)) constitute a Histidine kinase domain. Residues 247–254 (ELFKNSMR), Asp-286, 305–306 (ST), and 321–326 (GYGYGL) each bind ATP.

The protein belongs to the PDK/BCKDK protein kinase family.

Its subcellular location is the mitochondrion matrix. The enzyme catalyses L-seryl-[pyruvate dehydrogenase E1 alpha subunit] + ATP = O-phospho-L-seryl-[pyruvate dehydrogenase E1 alpha subunit] + ADP + H(+). In terms of biological role, inhibits the mitochondrial pyruvate dehydrogenase complex by phosphorylation of the E1 alpha subunit, thus contributing to the regulation of glucose metabolism. This chain is [Pyruvate dehydrogenase (acetyl-transferring)] kinase, mitochondrial, found in Ascaris suum (Pig roundworm).